The following is a 197-amino-acid chain: Protein GrpE (197 aa).

Positions 1-39 (MSSKEQKTPEGQAPEEIIMDQHEEIEAVEPEASAEQVDP) are disordered.

It belongs to the GrpE family. In terms of assembly, homodimer.

It is found in the cytoplasm. Functionally, participates actively in the response to hyperosmotic and heat shock by preventing the aggregation of stress-denatured proteins, in association with DnaK and GrpE. It is the nucleotide exchange factor for DnaK and may function as a thermosensor. Unfolded proteins bind initially to DnaJ; upon interaction with the DnaJ-bound protein, DnaK hydrolyzes its bound ATP, resulting in the formation of a stable complex. GrpE releases ADP from DnaK; ATP binding to DnaK triggers the release of the substrate protein, thus completing the reaction cycle. Several rounds of ATP-dependent interactions between DnaJ, DnaK and GrpE are required for fully efficient folding. This is Protein GrpE from Escherichia coli O157:H7 (strain EC4115 / EHEC).